We begin with the raw amino-acid sequence, 471 residues long: MSTDTRPTVRIRGIYSTALTKLFLDRGFGISQPSNKIVERFGLEKTYDDFDVDIYDKKDRHGVVLVGDAVEEAKKVLEEELIDVFFRRLPYQLYGIYKGLVVKIDEKYVYVDLGSAIGTIPRKDLPKAVEGDEILVQVKKHNLLPHLSTTLTIPGDYAVLIPKPIGAQRHVKISRKIRDNQERERLRILGLSIDLGKWGVLWRTAAAYKDWNLLRDEIVRLSKLADRLAKADTYFAPSLIIEGRNIYEVEFGGGAKRKLDEIRNKVVPTVDGHHQLKAKDPELGFAVEIAEGILSKVPGQRVKVNQGFWEALVENKGPKKGWLFTLEHVKPDGQRIRLGPGEVLEVSHNPLRVTIKRHLKPGKFYDGLELPIEFGDYAITELEAGKWWFVHRYYDKNGNLKGEYYNINTPVEIYPDGARYVDLEVDIVKWPDGKKEIIDQEELKEHYEEGIISEKLYRAVLRITQEVFERV.

Belongs to the FAU-1 family.

Probable RNase involved in rRNA stability through maturation and/or degradation of precursor rRNAs. Preferentially cleaves UA sequences in the 5' precursor region of 5S rRNA. Binds to RNA in loop regions with AU-rich sequences. This Thermococcus kodakarensis (strain ATCC BAA-918 / JCM 12380 / KOD1) (Pyrococcus kodakaraensis (strain KOD1)) protein is Probable ribonuclease FAU-1.